The sequence spans 273 residues: 4-hydroxy-3-methylbut-2-enyl diphosphate reductase (273 aa).

Cysteine 12 is a [4Fe-4S] cluster binding site. Residues histidine 36 and histidine 70 each coordinate (2E)-4-hydroxy-3-methylbut-2-enyl diphosphate. Histidine 36 and histidine 70 together coordinate dimethylallyl diphosphate. Isopentenyl diphosphate-binding residues include histidine 36 and histidine 70. Cysteine 92 serves as a coordination point for [4Fe-4S] cluster. A (2E)-4-hydroxy-3-methylbut-2-enyl diphosphate-binding site is contributed by histidine 120. Histidine 120 serves as a coordination point for dimethylallyl diphosphate. Histidine 120 serves as a coordination point for isopentenyl diphosphate. The active-site Proton donor is glutamate 122. Threonine 157 lines the (2E)-4-hydroxy-3-methylbut-2-enyl diphosphate pocket. [4Fe-4S] cluster is bound at residue cysteine 185. Serine 213, serine 214, asparagine 215, and serine 257 together coordinate (2E)-4-hydroxy-3-methylbut-2-enyl diphosphate. Dimethylallyl diphosphate is bound by residues serine 213, serine 214, asparagine 215, and serine 257. 4 residues coordinate isopentenyl diphosphate: serine 213, serine 214, asparagine 215, and serine 257.

The protein belongs to the IspH family. The cofactor is [4Fe-4S] cluster.

It catalyses the reaction isopentenyl diphosphate + 2 oxidized [2Fe-2S]-[ferredoxin] + H2O = (2E)-4-hydroxy-3-methylbut-2-enyl diphosphate + 2 reduced [2Fe-2S]-[ferredoxin] + 2 H(+). The catalysed reaction is dimethylallyl diphosphate + 2 oxidized [2Fe-2S]-[ferredoxin] + H2O = (2E)-4-hydroxy-3-methylbut-2-enyl diphosphate + 2 reduced [2Fe-2S]-[ferredoxin] + 2 H(+). The protein operates within isoprenoid biosynthesis; dimethylallyl diphosphate biosynthesis; dimethylallyl diphosphate from (2E)-4-hydroxy-3-methylbutenyl diphosphate: step 1/1. Its pathway is isoprenoid biosynthesis; isopentenyl diphosphate biosynthesis via DXP pathway; isopentenyl diphosphate from 1-deoxy-D-xylulose 5-phosphate: step 6/6. Functionally, catalyzes the conversion of 1-hydroxy-2-methyl-2-(E)-butenyl 4-diphosphate (HMBPP) into a mixture of isopentenyl diphosphate (IPP) and dimethylallyl diphosphate (DMAPP). Acts in the terminal step of the DOXP/MEP pathway for isoprenoid precursor biosynthesis. This Helicobacter hepaticus (strain ATCC 51449 / 3B1) protein is 4-hydroxy-3-methylbut-2-enyl diphosphate reductase.